A 1048-amino-acid polypeptide reads, in one-letter code: MKDMESIPGPKPLPVVGNLFDIDLENGLQSIIKMAHEFGPLFQITINGQKQIFATSQALVDELCDETRFHKAVMGGIQKLRMLAKDGLFTAYHGERGWGIAHRILMPAFGPLRIRDMFEDMSDVAQQLCFKWARQGSSTSINICDDFTRLTLDTIALCTMGFRLNSYYNSNALHPFIESMLYVLKEAELQSTLPGVANCMRVKAQRRMSKHIDAMRSMARNLIEERRAKPEPVDDLLNTLLNGRDPITGEGMSDDLIISNIITFLIAGHETTSGLLSFTFYYLLQNQDVLERARNEVDEVTGVGPITVQHLAKLPYIDAIMKESLRLMPTAPAFTVTPQKPEVLGGKWMINTGDSVNLLLPVCLRDETVFGPDAGEFRPNRMLEENFSKLPPNSWKPFGNGERGCIGRAFAWQEAQLVVALVLRTFDLAAEDPYYKLRIKETLTIKPDGFRIRATLRHGKSATALSQHNISVGAAASPASSTYLAGNENGRDAAGGQPVSFFYGSNSGTCKALTHRLASTMMTRGFTDQNIAPLDSAVDNLPRDQPTIIITTTYDGQPTDDAKKFVAWLESGNSPSLQGVSYAVFGCGHQDWTKTFYRIPILIDNLMYKAGATRLATRGAANAAISDLFSDLEVWEETNLLPGLRESFYPPNNSNFVPLEPHQLQISINKPTRVGMHRDLIEAKVTAIRTLTSPGAPEKRHLEFCIPGETTLRPGDHLNILPVNPPSTVSRALARFNLAPDHSITFESSNALDLPQATPVSAAELFSSYLELSQPATRNNLKELASTTPSDGEKQELLHLYDSYDSLIRAKRASVLDLLEQFTSVTLPITTFISMLPALRVRTYSLSMAPSFKPLHYSLTFSVINEPAWNGNGRYLGVASNYLASLNLGSILYISPRPAKDAFHLPTDQSSKPIIMICAGSGLAPFRSFIQDRMLWQQQDKTLAKALLFFGCRSPQLDDLYHDELSQFEAAGVVEVRRAYSKVPNHYLAKGCRYVQHRLLTETETIQDMWAQDAIIYVCGSGNLAKGVKAVLESMLGTLYERYITEIF.

Residue Cys405 coordinates heme. The region spanning 499 to 640 (VSFFYGSNSG…DLEVWEETNL (142 aa)) is the Flavodoxin-like domain. FMN is bound by residues 505 to 509 (SNSGT) and 584 to 616 (VFGCGHQDWTKTFYRIPILIDNLMYKAGATRLA). An FAD-binding FR-type domain is found at 678–906 (RDLIEAKVTA…RPAKDAFHLP (229 aa)).

In the N-terminal section; belongs to the cytochrome P450 family. The cofactor is FAD. It depends on FMN as a cofactor. Requires heme as cofactor.

The catalysed reaction is 2 oxidized [cytochrome P450] + NADPH = 2 reduced [cytochrome P450] + NADP(+) + H(+). It catalyses the reaction an organic molecule + reduced [NADPH--hemoprotein reductase] + O2 = an alcohol + oxidized [NADPH--hemoprotein reductase] + H2O + H(+). It carries out the reaction dodecanoate + reduced [NADPH--hemoprotein reductase] + O2 = 5-hydroxydodecanoate + oxidized [NADPH--hemoprotein reductase] + H2O + H(+). The enzyme catalyses tetradecanoate + reduced [NADPH--hemoprotein reductase] + O2 = 7-hydroxytetradecanoate + oxidized [NADPH--hemoprotein reductase] + H2O + H(+). The catalysed reaction is dodecan-1-ol + reduced [NADPH--hemoprotein reductase] + O2 = 1,5-dodecanediol + oxidized [NADPH--hemoprotein reductase] + H2O + H(+). It catalyses the reaction dodecan-1-ol + reduced [NADPH--hemoprotein reductase] + O2 = 1,4-dodecanediol + oxidized [NADPH--hemoprotein reductase] + H2O + H(+). It carries out the reaction dodecan-1-ol + reduced [NADPH--hemoprotein reductase] + O2 = 1,6-dodecanediol + oxidized [NADPH--hemoprotein reductase] + H2O + H(+). Functionally, self-sufficient cytochrome P450 monooxygenase that catalyzes the regioselective in-chain hydroxylation of alkanes, fatty alcohols, and fatty acids at the omega-7 position. Performs hydroxylation of C10-C16 n-alkanes and C12 and C14 fatty alcohols; and thereby enables the one step biocatalytic synthesis of rare alcohols such as 5-dodecanol and 7-tetradecanol. Converts 1-dodecanol into 1,5-dodecanediol as major product with very little sub-terminally hydroxylated products with the 1,4-dodecanediol and 1,6-dodecanediol more abundant. Converts dodecanoic acid to 5-hydroxydodecanoic acid which can be further converted into delta-dodecalactone by lactonization of the 5-hydroxy acid at low pH. Also gives sub-terminal hydroxylation of dodecanoic acid with 9-hydroxydodecanoic acid being the second most abundant product. The chain is Self-sufficient cytochrome P450 monooxygenase CYP505E4 from Penicillium expansum (Blue mold rot fungus).